We begin with the raw amino-acid sequence, 94 residues long: Acylphosphatase (94 aa).

One can recognise an Acylphosphatase-like domain in the interval 7-94 (AVRVRISGRV…NMPRDFRITG (88 aa)). Residues Arg22 and Asn40 contribute to the active site.

Belongs to the acylphosphatase family.

It catalyses the reaction an acyl phosphate + H2O = a carboxylate + phosphate + H(+). The protein is Acylphosphatase (acyP) of Rhizobium etli (strain ATCC 51251 / DSM 11541 / JCM 21823 / NBRC 15573 / CFN 42).